The following is a 652-amino-acid chain: Vacuolar fusion protein MON1 homolog A (652 aa).

The tract at residues 102 to 141 is disordered; that stretch reads MQRKRSSECLDGTLTPSDGQSMERAESPTPGMAQGMEPGA. A phosphoserine mark is found at S128 and S153. Position 158 is a phosphothreonine (T158). A disordered region spans residues 158–185; the sequence is TESEDGAASGDSHKEGTRGPPPLPTDMR. S188 carries the phosphoserine modification. A disordered region spans residues 211-245; the sequence is PGSSEDWLEPPGAVGRPATEPPREGTTEGDEEDAT.

It belongs to the MON1/SAND family. As to quaternary structure, interacts with CCZ1. Found in a complex with RMC1, CCZ1, MON1A and MON1B. The MON1A-CCZ1B complex interacts with RIMOC1. The MON1A-CCZ1B complex interacts with RAB7A and this interaction is enhanced in the presence of RIMOC1.

In terms of biological role, plays an important role in membrane trafficking through the secretory apparatus. Not involved in endocytic trafficking to lysosomes. Acts in concert with CCZ1, as a guanine exchange factor (GEF) for RAB7, promotes the exchange of GDP to GTP, converting it from an inactive GDP-bound form into an active GTP-bound form. The protein is Vacuolar fusion protein MON1 homolog A (MON1A) of Homo sapiens (Human).